The chain runs to 702 residues: Polyribonucleotide nucleotidyltransferase (702 aa).

Residues Asp493 and Asp499 each coordinate Mg(2+). In terms of domain architecture, KH spans 559-619; it reads PKVEIFNVDP…NLISQSKEYI (61 aa). The 60-residue stretch at 643-702 folds into the S1 motif domain; sequence GEEFLGRVQKVVEFGVFVELKEGVDGLLHNSKIKEKLEVGHEIKVKVAEIKNGKVSLDLA.

It belongs to the polyribonucleotide nucleotidyltransferase family. It depends on Mg(2+) as a cofactor.

The protein resides in the cytoplasm. The enzyme catalyses RNA(n+1) + phosphate = RNA(n) + a ribonucleoside 5'-diphosphate. Its function is as follows. Involved in mRNA degradation. Catalyzes the phosphorolysis of single-stranded polyribonucleotides processively in the 3'- to 5'-direction. The polypeptide is Polyribonucleotide nucleotidyltransferase (Campylobacter lari (strain RM2100 / D67 / ATCC BAA-1060)).